Consider the following 290-residue polypeptide: 4-hydroxy-tetrahydrodipicolinate synthase (290 aa).

Residue Thr44 coordinates pyruvate. Tyr131 (proton donor/acceptor) is an active-site residue. Lys159 functions as the Schiff-base intermediate with substrate in the catalytic mechanism. Residue Ile201 participates in pyruvate binding.

It belongs to the DapA family. Homotetramer; dimer of dimers.

The protein localises to the cytoplasm. It carries out the reaction L-aspartate 4-semialdehyde + pyruvate = (2S,4S)-4-hydroxy-2,3,4,5-tetrahydrodipicolinate + H2O + H(+). The protein operates within amino-acid biosynthesis; L-lysine biosynthesis via DAP pathway; (S)-tetrahydrodipicolinate from L-aspartate: step 3/4. Its function is as follows. Catalyzes the condensation of (S)-aspartate-beta-semialdehyde [(S)-ASA] and pyruvate to 4-hydroxy-tetrahydrodipicolinate (HTPA). The polypeptide is 4-hydroxy-tetrahydrodipicolinate synthase (Jannaschia sp. (strain CCS1)).